The sequence spans 348 residues: 3-keto-steroid reductase (348 aa).

NADP(+) is bound by residues Leu18, Thr41, and Arg47. Catalysis depends on proton donor residues Ser180 and Tyr203. 3 residues coordinate NADP(+): Tyr203, Lys207, and Ser238. Lys207 functions as the Lowers pKa of active site Tyr in the catalytic mechanism.

The protein belongs to the short-chain dehydrogenases/reductases (SDR) family. ERG27 subfamily.

It catalyses the reaction a 3beta-hydroxysteroid + NADP(+) = a 3-oxosteroid + NADPH + H(+). It participates in steroid biosynthesis; zymosterol biosynthesis; zymosterol from lanosterol: step 5/6. Its function is as follows. Responsible for the reduction of the keto group on the C-3 of sterols. This chain is 3-keto-steroid reductase (ERG27), found in Candida glabrata (strain ATCC 2001 / BCRC 20586 / JCM 3761 / NBRC 0622 / NRRL Y-65 / CBS 138) (Yeast).